The following is a 1407-amino-acid chain: DNA-directed RNA polymerase subunit beta' (1407 aa).

4 residues coordinate Zn(2+): C70, C72, C85, and C88. D460, D462, and D464 together coordinate Mg(2+). Residues C814, C888, C895, and C898 each contribute to the Zn(2+) site.

The protein belongs to the RNA polymerase beta' chain family. In terms of assembly, the RNAP catalytic core consists of 2 alpha, 1 beta, 1 beta' and 1 omega subunit. When a sigma factor is associated with the core the holoenzyme is formed, which can initiate transcription. The cofactor is Mg(2+). Zn(2+) serves as cofactor.

The enzyme catalyses RNA(n) + a ribonucleoside 5'-triphosphate = RNA(n+1) + diphosphate. Functionally, DNA-dependent RNA polymerase catalyzes the transcription of DNA into RNA using the four ribonucleoside triphosphates as substrates. The sequence is that of DNA-directed RNA polymerase subunit beta' from Salmonella choleraesuis (strain SC-B67).